Here is a 1392-residue protein sequence, read N- to C-terminus: DNA-directed RNA polymerase subunit beta'' (1392 aa).

Residues C224, C295, C302, and C305 each contribute to the Zn(2+) site.

Belongs to the RNA polymerase beta' chain family. RpoC2 subfamily. In terms of assembly, in plastids the minimal PEP RNA polymerase catalytic core is composed of four subunits: alpha, beta, beta', and beta''. When a (nuclear-encoded) sigma factor is associated with the core the holoenzyme is formed, which can initiate transcription. Zn(2+) serves as cofactor.

It is found in the plastid. Its subcellular location is the chloroplast. It carries out the reaction RNA(n) + a ribonucleoside 5'-triphosphate = RNA(n+1) + diphosphate. DNA-dependent RNA polymerase catalyzes the transcription of DNA into RNA using the four ribonucleoside triphosphates as substrates. The protein is DNA-directed RNA polymerase subunit beta'' of Solanum lycopersicum (Tomato).